We begin with the raw amino-acid sequence, 268 residues long: Energy-coupling factor transporter transmembrane protein EcfT (268 aa).

Transmembrane regions (helical) follow at residues 26-46, 72-92, 106-126, 149-169, and 247-267; these read IVTFVYIIVMLWASNWQTYAW, IFWLILFTVILQLLFTPGTPI, ILNAIYVMVRFVLIILMSTIL, IGVPVAELALMLAIALRFVPL, and VAFAALIGFVIIFFVIKTWLH.

This sequence belongs to the energy-coupling factor EcfT family. As to quaternary structure, forms a stable energy-coupling factor (ECF) transporter complex composed of 2 membrane-embedded substrate-binding proteins (S component), 2 ATP-binding proteins (A component) and 2 transmembrane proteins (T component). May be able to interact with more than 1 S component at a time.

It localises to the cell membrane. Its function is as follows. Transmembrane (T) component of an energy-coupling factor (ECF) ABC-transporter complex. Unlike classic ABC transporters this ECF transporter provides the energy necessary to transport a number of different substrates. In Leuconostoc gelidum subsp. gasicomitatum (strain DSM 15947 / CCUG 46042 / CECT 5767 / JCM 12535 / LMG 18811 / NBRC 113245 / TB1-10) (Leuconostoc gasicomitatum), this protein is Energy-coupling factor transporter transmembrane protein EcfT.